Reading from the N-terminus, the 342-residue chain is tRNA N6-adenosine threonylcarbamoyltransferase (342 aa).

Histidine 114 and histidine 118 together coordinate Fe cation. Residues 136-140 (LVSGG), aspartate 169, glycine 182, aspartate 186, and asparagine 275 contribute to the substrate site. Residue aspartate 301 participates in Fe cation binding.

Belongs to the KAE1 / TsaD family. It depends on Fe(2+) as a cofactor.

Its subcellular location is the cytoplasm. The catalysed reaction is L-threonylcarbamoyladenylate + adenosine(37) in tRNA = N(6)-L-threonylcarbamoyladenosine(37) in tRNA + AMP + H(+). Its function is as follows. Required for the formation of a threonylcarbamoyl group on adenosine at position 37 (t(6)A37) in tRNAs that read codons beginning with adenine. Is involved in the transfer of the threonylcarbamoyl moiety of threonylcarbamoyl-AMP (TC-AMP) to the N6 group of A37, together with TsaE and TsaB. TsaD likely plays a direct catalytic role in this reaction. This Streptococcus pyogenes serotype M2 (strain MGAS10270) protein is tRNA N6-adenosine threonylcarbamoyltransferase.